The primary structure comprises 140 residues: Histone H2B (140 aa).

The span at 1–10 shows a compositional bias: basic and acidic residues; it reads MPPKAAEKKP. The disordered stretch occupies residues 1–48; it reads MPPKAAEKKPSTGGKAPAGKAPAEKKEAGKKTAAAASGDKKKRGKTRK. 2 positions are modified to N6-acetyllysine; alternate: Lys8 and Lys9. Glycyl lysine isopeptide (Lys-Gly) (interchain with G-Cter in SUMO); alternate cross-links involve residues Lys8 and Lys9. Low complexity predominate over residues 11 to 21; it reads STGGKAPAGKA. Lys15 carries the post-translational modification N6-acetyllysine. Lys25 bears the N6-acetyllysine; alternate mark. A Glycyl lysine isopeptide (Lys-Gly) (interchain with G-Cter in SUMO); alternate cross-link involves residue Lys25. Residue Lys26 forms a Glycyl lysine isopeptide (Lys-Gly) (interchain with G-Cter in SUMO) linkage. Lys134 is covalently cross-linked (Glycyl lysine isopeptide (Lys-Gly) (interchain with G-Cter in ubiquitin)).

This sequence belongs to the histone H2B family. In terms of assembly, the nucleosome is a histone octamer containing two molecules each of H2A, H2B, H3 and H4 assembled in one H3-H4 heterotetramer and two H2A-H2B heterodimers. The octamer wraps approximately 147 bp of DNA. Post-translationally, monoubiquitinated by the ubc2-bre1 complex to form H2BK123ub1. H2BK123ub1 gives a specific tag for epigenetic transcriptional activation and is also prerequisite for H3K4me and H3K79me formation. H2BK123ub1 also modulates the formation of double-strand breaks during meiosis and is a prerequisite for DNA-damage checkpoint activation. Acetylated by gcn5 to form H2BK11ac and H2BK16ac. H2BK16ac can also be formed by esa1. Acetylation of N-terminal lysines and particularly formation of H2BK11acK16ac has a positive effect on transcription. In terms of processing, sumoylation to form H2BK6su or H2BK7su, and probably also H2BK16su or H2BK17su, occurs preferentially near the telomeres and represses gene transcription.

The protein resides in the nucleus. Its subcellular location is the chromosome. In terms of biological role, core component of nucleosome. Nucleosomes wrap and compact DNA into chromatin, limiting DNA accessibility to the cellular machineries which require DNA as a template. Histones thereby play a central role in transcription regulation, DNA repair, DNA replication and chromosomal stability. DNA accessibility is regulated via a complex set of post-translational modifications of histones, also called histone code, and nucleosome remodeling. The sequence is that of Histone H2B (htb1) from Aspergillus clavatus (strain ATCC 1007 / CBS 513.65 / DSM 816 / NCTC 3887 / NRRL 1 / QM 1276 / 107).